Consider the following 216-residue polypeptide: ATP phosphoribosyltransferase (216 aa).

It belongs to the ATP phosphoribosyltransferase family. Short subfamily. As to quaternary structure, heteromultimer composed of HisG and HisZ subunits.

It localises to the cytoplasm. It catalyses the reaction 1-(5-phospho-beta-D-ribosyl)-ATP + diphosphate = 5-phospho-alpha-D-ribose 1-diphosphate + ATP. It participates in amino-acid biosynthesis; L-histidine biosynthesis; L-histidine from 5-phospho-alpha-D-ribose 1-diphosphate: step 1/9. In terms of biological role, catalyzes the condensation of ATP and 5-phosphoribose 1-diphosphate to form N'-(5'-phosphoribosyl)-ATP (PR-ATP). Has a crucial role in the pathway because the rate of histidine biosynthesis seems to be controlled primarily by regulation of HisG enzymatic activity. The polypeptide is ATP phosphoribosyltransferase (Nitrosomonas europaea (strain ATCC 19718 / CIP 103999 / KCTC 2705 / NBRC 14298)).